The following is a 284-amino-acid chain: Tropomyosin (284 aa).

A coiled-coil region spans residues 1–273 (MDAIKKKMVA…KEKYKAISDE (273 aa)). Basic and acidic residues predominate over residues 110 to 130 (SGKLEEASKAADESERNRKVL). The interval 110 to 134 (SGKLEEASKAADESERNRKVLENLN) is disordered.

This sequence belongs to the tropomyosin family. Homodimer.

In terms of biological role, tropomyosin, in association with the troponin complex, plays a central role in the calcium dependent regulation of muscle contraction. This chain is Tropomyosin, found in Perna viridis (Asian green mussel).